Here is a 99-residue protein sequence, read N- to C-terminus: Plastocyanin (99 aa).

Positions 1–99 (IEVLLGGDDG…AGMVGKVTVN (99 aa)) constitute a Plastocyanin-like domain. Positions 37, 84, 87, and 92 each coordinate Cu cation.

The protein belongs to the plastocyanin family. The cofactor is Cu(2+).

It is found in the plastid. It localises to the chloroplast thylakoid membrane. Participates in electron transfer between P700 and the cytochrome b6-f complex in photosystem I. The sequence is that of Plastocyanin (PETE) from Cucurbita pepo (Vegetable marrow).